A 478-amino-acid polypeptide reads, in one-letter code: Islet cell autoantigen 1 (478 aa).

An AH domain is found at 50–253; it reads ASDADLDAKL…TSHTMAAIHE (204 aa). The span at 306–317 shows a compositional bias: basic and acidic residues; sequence EHKDSSAYKTEE. 2 disordered regions span residues 306–365 and 398–422; these read EHKD…SGDK and LKEP…GFLP.

As to expression, predominantly expressed in brain, pancreas and stomach mucosa. High expression also found in stomach muscle and testis.

The protein resides in the cytoplasm. It localises to the cytosol. The protein localises to the golgi apparatus membrane. It is found in the cytoplasmic vesicle. Its subcellular location is the secretory vesicle membrane. The protein resides in the secretory vesicle. It localises to the synaptic vesicle membrane. Its function is as follows. May play a role in neurotransmitter secretion. The polypeptide is Islet cell autoantigen 1 (Mus musculus (Mouse)).